The primary structure comprises 91 residues: Acylphosphatase (91 aa).

One can recognise an Acylphosphatase-like domain in the interval Arg-5–Gly-91. Residues Arg-20 and Asn-38 contribute to the active site.

This sequence belongs to the acylphosphatase family.

It catalyses the reaction an acyl phosphate + H2O = a carboxylate + phosphate + H(+). This chain is Acylphosphatase (acyP), found in Thermococcus kodakarensis (strain ATCC BAA-918 / JCM 12380 / KOD1) (Pyrococcus kodakaraensis (strain KOD1)).